The chain runs to 151 residues: Large ribosomal subunit protein bL17 (151 aa).

This sequence belongs to the bacterial ribosomal protein bL17 family. In terms of assembly, part of the 50S ribosomal subunit. Contacts protein L32.

In Chlorobium limicola (strain DSM 245 / NBRC 103803 / 6330), this protein is Large ribosomal subunit protein bL17.